A 536-amino-acid chain; its full sequence is SNW domain-containing protein 1 (536 aa).

Residues 1–46 (MALTSFLPAPTQLSQDQLEAEEKARSQRSRQTSLVSSRREPPPYGY) are disordered. The residue at position 2 (Ala2) is an N-acetylalanine. Ser14 bears the Phosphoserine mark. A Glycyl lysine isopeptide (Lys-Gly) (interchain with G-Cter in SUMO2) cross-link involves residue Lys23. Residues 59 to 79 (GDGGAFPEIHVAQYPLDMGRK) are interaction with PPIL1. Residues Lys81, Lys97, Lys115, Lys122, Lys141, Lys158, and Lys170 each participate in a glycyl lysine isopeptide (Lys-Gly) (interchain with G-Cter in SUMO2) cross-link. Positions 174–339 (AQYIRYTPSQ…KARERRAGIK (166 aa)) are SNW. Ser182 and Ser190 each carry phosphoserine. Residue Lys193 forms a Glycyl lysine isopeptide (Lys-Gly) (interchain with G-Cter in SUMO2) linkage. Residues 209 to 233 (PPRFKINKKIPRGPPSPPAPVMHSP) are disordered. A phosphoserine mark is found at Ser224, Ser232, and Ser234. Residues Lys240, Lys258, Lys286, Lys339, Lys344, Lys416, and Lys441 each participate in a glycyl lysine isopeptide (Lys-Gly) (interchain with G-Cter in SUMO2) cross-link. The interval 311–386 (KMAQKEKEKH…RSKLQRNENR (76 aa)) is disordered. At Ser446 the chain carries Phosphoserine. Lys452 is covalently cross-linked (Glycyl lysine isopeptide (Lys-Gly) (interchain with G-Cter in SUMO2)). Composition is skewed to basic and acidic residues over residues 470 to 489 (NRFVPDKEFSGSDRRQRGRE) and 503 to 530 (KFLEEAKQHGGSKRPSDSSRPKEHEHEG). Residues 470 to 536 (NRFVPDKEFS…EHEGKKRRKE (67 aa)) are disordered. A phosphoserine mark is found at Ser479 and Ser481. Lys509 participates in a covalent cross-link: Glycyl lysine isopeptide (Lys-Gly) (interchain with G-Cter in SUMO2).

Belongs to the SNW family. Identified in the spliceosome C complex. Associates with U4/U6-U5 tri-small nuclear ribonucleoproteins (U4/U6-U5 tri-snRNPs). Component of the minor spliceosome, which splices U12-type introns. Interacts with SKI, SMAD2,SMAD3, RBPJ, RB1, PABPN1, MAGEA1, SIRT1, FOXN3, U2AF2, DAXX and ATP1B4. Interacts with PPIL1. Interacts with VDR and RXRA; preferentially associates with VDR:RXRA heterodimers. Interacts with NCOR2. Interacts with MAML1. Interacts with NOTCH1 NICD; the interaction involves multimerized NOTCH1 NICD. Forms a complex with NOTCH1 NICD and MAML1; the association is dissociated by RBPJ. Associates with positive transcription elongation factor b (P-TEFb). Component of the SNARP complex which consists at least of SNIP1, SNW1, THRAP3, BCLAF1 and PNN. As to quaternary structure, (Microbial infection) Interacts with human papillomavirus type-16 (HPV16) E7 protein. In terms of assembly, (Microbial infection) Interacts with EBV EBNA2; EBNA2 competes with NCOR2 for interaction with SNW1.

The protein resides in the nucleus. Its function is as follows. Involved in pre-mRNA splicing as component of the spliceosome. As a component of the minor spliceosome, involved in the splicing of U12-type introns in pre-mRNAs. Required for the specific splicing of CDKN1A pre-mRNA; the function probably involves the recruitment of U2AF2 to the mRNA. May recruit PPIL1 to the spliceosome. May be involved in cyclin-D1/CCND1 mRNA stability through the SNARP complex which associates with both the 3'end of the CCND1 gene and its mRNA. Involved in transcriptional regulation. Modulates TGF-beta-mediated transcription via association with SMAD proteins, MYOD1-mediated transcription via association with PABPN1, RB1-mediated transcriptional repression, and retinoid-X receptor (RXR)- and vitamin D receptor (VDR)-dependent gene transcription in a cell line-specific manner probably involving coactivators NCOA1 and GRIP1. Is involved in NOTCH1-mediated transcriptional activation. Binds to multimerized forms of Notch intracellular domain (NICD) and is proposed to recruit transcriptional coactivators such as MAML1 to form an intermediate preactivation complex which associates with DNA-bound CBF-1/RBPJ to form a transcriptional activation complex by releasing SNW1 and redundant NOTCH1 NICD. (Microbial infection) Is recruited by HIV-1 Tat to Tat:P-TEFb:TAR RNA complexes and is involved in Tat transcription by recruitment of MYC, MEN1 and TRRAP to the HIV promoter. In terms of biological role, (Microbial infection) Proposed to be involved in transcriptional activation by EBV EBNA2 of CBF-1/RBPJ-repressed promoters. This is SNW domain-containing protein 1 (SNW1) from Homo sapiens (Human).